The primary structure comprises 1547 residues: Transposon Ty3-G Gag-Pol polyprotein (1547 aa).

At serine 2 the chain carries N-acetylserine. The segment at 265 to 282 (RLCFYCKKEGHRLNECRA) adopts a CCHC-type zinc-finger fold. Catalysis depends on aspartate 336, which acts as the For protease activity; shared with dimeric partner. The 178-residue stretch at 620 to 797 (LDNKFIVPSK…EETEFLGYSI (178 aa)) folds into the Reverse transcriptase domain. Mg(2+)-binding residues include aspartate 686, aspartate 748, aspartate 749, aspartate 893, glutamate 936, and aspartate 961. The RNase H Ty3/gyspy-type domain occupies 893 to 1011 (DASKDGIGAV…VADAISRAVY (119 aa)). The tract at residues 1106–1145 (HTLFGGHFGVTVTLAKISPIYYWPKLQHSIIQYIRTCVQC) is integrase-type zinc finger-like. One can recognise an Integrase catalytic domain in the interval 1159–1324 (LQPLPIAEGR…SPFEIDLGYL (166 aa)). The Mg(2+) site is built by aspartate 1175 and aspartate 1236.

As to quaternary structure, the protease is a homodimer, whose active site consists of two apposed aspartic acid residues. In terms of processing, initially, virus-like particles (VLPs) are composed of the structural unprocessed proteins Gag and Gag-Pol, and also contain the host initiator methionine tRNA (tRNA(i)-Met) which serves as a primer for minus-strand DNA synthesis, and a dimer of genomic Ty RNA. Processing of the polyproteins occurs within the particle and proceeds by an ordered pathway, called maturation. First, the protease (PR) is released by autocatalytic cleavage of the Gag-Pol polyprotein, and this cleavage is a prerequisite for subsequent processing at the remaining sites to release the mature structural and catalytic proteins. Maturation takes place prior to the RT reaction and is required to produce transposition-competent VLPs.

The protein resides in the cytoplasm. Its subcellular location is the nucleus. The catalysed reaction is DNA(n) + a 2'-deoxyribonucleoside 5'-triphosphate = DNA(n+1) + diphosphate. It catalyses the reaction Endonucleolytic cleavage to 5'-phosphomonoester.. Capsid protein (CA) is the structural component of the virus-like particle (VLP), forming the shell that encapsulates the genomic RNA-nucleocapsid complex. Its function is as follows. Nucleocapsid protein p11 (NC) forms the nucleocore that coats the retro-elements dimeric RNA. Binds these RNAs through its zinc fingers. Promotes primer tRNA(i)-Met annealing to the multipartite primer-binding site (PBS), dimerization of Ty3 RNA and initiation of reverse transcription. In terms of biological role, the aspartyl protease (PR) mediates the proteolytic cleavages of the Gag and Gag-Pol polyproteins after assembly of the VLP. Functionally, reverse transcriptase/ribonuclease H (RT) is a multifunctional enzyme that catalyzes the conversion of the retro-elements RNA genome into dsDNA within the VLP. The enzyme displays a DNA polymerase activity that can copy either DNA or RNA templates, and a ribonuclease H (RNase H) activity that cleaves the RNA strand of RNA-DNA heteroduplexes during plus-strand synthesis and hydrolyzes RNA primers. The conversion leads to a linear dsDNA copy of the retrotransposon that includes long terminal repeats (LTRs) at both ends. Integrase (IN) targets the VLP to the nucleus, where a subparticle preintegration complex (PIC) containing at least integrase and the newly synthesized dsDNA copy of the retrotransposon must transit the nuclear membrane. Once in the nucleus, integrase performs the integration of the dsDNA into the host genome. The polypeptide is Transposon Ty3-G Gag-Pol polyprotein (TY3B-G) (Saccharomyces cerevisiae (strain ATCC 204508 / S288c) (Baker's yeast)).